Reading from the N-terminus, the 1025-residue chain is Beta-galactosidase (1025 aa).

2 residues coordinate substrate: Asn105 and Asp204. Asp204 provides a ligand contact to Na(+). Mg(2+)-binding residues include Glu417, His419, and Glu462. Substrate is bound by residues Glu462 and 538-541 (EYAH). Residue Glu462 is the Proton donor of the active site. The active-site Nucleophile is Glu538. Asn598 contacts Mg(2+). The Na(+) site is built by Phe602 and Asn605. Substrate-binding residues include Asn605 and Trp1003.

Belongs to the glycosyl hydrolase 2 family. As to quaternary structure, homotetramer. Mg(2+) serves as cofactor. It depends on Na(+) as a cofactor.

It carries out the reaction Hydrolysis of terminal non-reducing beta-D-galactose residues in beta-D-galactosides.. The chain is Beta-galactosidase from Aeromonas hydrophila subsp. hydrophila (strain ATCC 7966 / DSM 30187 / BCRC 13018 / CCUG 14551 / JCM 1027 / KCTC 2358 / NCIMB 9240 / NCTC 8049).